Consider the following 316-residue polypeptide: MTPLSAVATPTPAPAEAADSRFSNTFLRLKKKLERGVGKAIADFNMIGDGDTVMVCVSGGKDSYTLLSCLLALRERAPVDFRIIAMNLDQKQPGFPAEVLPAYFESIGVEYRIVTEDTYSIVKDKIPEGKTTCSLCSRLRRGIIYRVARELGATRIALGHHRDDMLETLFLNLFFGGKIKAMPPKLVSDNGEHVVIRPLAYCTEADIAKFARTMEFPIIPCNLCGSQENAQRKQIKTMLQGWAREHPGRIESIATALGQVVPSHLADASLFDFRNLTRDTLVAEGDIAFDRAELPPASAAVMPTVMQLTDHRTDGK.

A PP-loop motif motif is present at residues 58 to 63 (SGGKDS). The [4Fe-4S] cluster site is built by cysteine 133, cysteine 136, and cysteine 224.

This sequence belongs to the TtcA family. Homodimer. It depends on Mg(2+) as a cofactor. The cofactor is [4Fe-4S] cluster.

It is found in the cytoplasm. It carries out the reaction cytidine(32) in tRNA + S-sulfanyl-L-cysteinyl-[cysteine desulfurase] + AH2 + ATP = 2-thiocytidine(32) in tRNA + L-cysteinyl-[cysteine desulfurase] + A + AMP + diphosphate + H(+). It functions in the pathway tRNA modification. Functionally, catalyzes the ATP-dependent 2-thiolation of cytidine in position 32 of tRNA, to form 2-thiocytidine (s(2)C32). The sulfur atoms are provided by the cysteine/cysteine desulfurase (IscS) system. This is tRNA-cytidine(32) 2-sulfurtransferase from Aromatoleum aromaticum (strain DSM 19018 / LMG 30748 / EbN1) (Azoarcus sp. (strain EbN1)).